We begin with the raw amino-acid sequence, 112 residues long: Putative pterin-4-alpha-carbinolamine dehydratase (112 aa).

The protein belongs to the pterin-4-alpha-carbinolamine dehydratase family.

The enzyme catalyses (4aS,6R)-4a-hydroxy-L-erythro-5,6,7,8-tetrahydrobiopterin = (6R)-L-erythro-6,7-dihydrobiopterin + H2O. This is Putative pterin-4-alpha-carbinolamine dehydratase from Shewanella frigidimarina (strain NCIMB 400).